Reading from the N-terminus, the 385-residue chain is Methionine aminopeptidase 1 (385 aa).

A C6H2-type zinc finger spans residues 6 to 59 (SRVCETEGCSSEAKLQCPTCIKLGIQGSYFCSQECFKGSWASHKLLHKKAKDDK). Zn(2+) contacts are provided by cysteine 9, cysteine 14, cysteine 22, cysteine 25, cysteine 36, cysteine 40, histidine 48, and histidine 52. Histidine 203 is an a protein binding site. The Zn(2+) site is built by aspartate 220, aspartate 231, and histidine 294. Position 301 (histidine 301) interacts with a protein. Zn(2+) contacts are provided by glutamate 327 and glutamate 358.

Belongs to the peptidase M24A family. Methionine aminopeptidase type 1 subfamily. Associates with the 60S ribosomal subunit of the 80S translational complex. The cofactor is Zn(2+). Co(2+) serves as cofactor. Requires Mn(2+) as cofactor. It depends on Fe(2+) as a cofactor.

The protein resides in the cytoplasm. The catalysed reaction is Release of N-terminal amino acids, preferentially methionine, from peptides and arylamides.. Cotranslationally removes the N-terminal methionine from nascent proteins. The N-terminal methionine is often cleaved when the second residue in the primary sequence is small and uncharged (Met-Ala-, Cys, Gly, Pro, Ser, Thr, or Val). The sequence is that of Methionine aminopeptidase 1 (metap1) from Xenopus tropicalis (Western clawed frog).